A 366-amino-acid chain; its full sequence is Ribosomal RNA large subunit methyltransferase M (366 aa).

S-adenosyl-L-methionine contacts are provided by residues Ser188, 221-224 (CPGG), Asp240, Asp260, and Asp277. Lys306 serves as the catalytic Proton acceptor.

This sequence belongs to the class I-like SAM-binding methyltransferase superfamily. RNA methyltransferase RlmE family. RlmM subfamily. As to quaternary structure, monomer.

The protein localises to the cytoplasm. The enzyme catalyses cytidine(2498) in 23S rRNA + S-adenosyl-L-methionine = 2'-O-methylcytidine(2498) in 23S rRNA + S-adenosyl-L-homocysteine + H(+). In terms of biological role, catalyzes the 2'-O-methylation at nucleotide C2498 in 23S rRNA. This chain is Ribosomal RNA large subunit methyltransferase M, found in Pectobacterium atrosepticum (strain SCRI 1043 / ATCC BAA-672) (Erwinia carotovora subsp. atroseptica).